A 290-amino-acid polypeptide reads, in one-letter code: Arylamine N-acetyltransferase, pineal gland isozyme NAT-10 (290 aa).

Residue Cys-68 is the Acyl-thioester intermediate of the active site. Catalysis depends on residues His-107 and Asp-122.

Belongs to the arylamine N-acetyltransferase family.

The catalysed reaction is an arylamine + acetyl-CoA = an N-acetylarylamine + CoA. The polypeptide is Arylamine N-acetyltransferase, pineal gland isozyme NAT-10 (Gallus gallus (Chicken)).